The primary structure comprises 243 residues: NADH-ubiquinone oxidoreductase chain 6 (243 aa).

A run of 5 helical transmembrane segments spans residues 16 to 36 (ISSVLDIISILAIFCGISVIV), 41 to 61 (IISVLFLIGLFASVSSYLILL), 69 to 89 (AYLIVYIGAISILFLFILMLI), 104 to 124 (IPLTIILGISLSYSLFQLLPY), and 201 to 221 (IWLFLASFILLLAMVGSIVII).

It belongs to the complex I subunit 6 family.

It is found in the mitochondrion membrane. The catalysed reaction is a ubiquinone + NADH + 5 H(+)(in) = a ubiquinol + NAD(+) + 4 H(+)(out). Functionally, core subunit of the mitochondrial membrane respiratory chain NADH dehydrogenase (Complex I) that is believed to belong to the minimal assembly required for catalysis. Complex I functions in the transfer of electrons from NADH to the respiratory chain. The immediate electron acceptor for the enzyme is believed to be ubiquinone. This Neurospora crassa (strain ATCC 24698 / 74-OR23-1A / CBS 708.71 / DSM 1257 / FGSC 987) protein is NADH-ubiquinone oxidoreductase chain 6 (ndh-6).